The following is a 417-amino-acid chain: Calreticulin (417 aa).

The first 17 residues, 1–17 (MLLSVPLLLGLLGLAAA), serve as a signal peptide directing secretion. Residues 18 to 197 (EPAVYFKEQF…NSQVESGSLE (180 aa)) form an N-domain region. Gln-26 provides a ligand contact to Ca(2+). Position 48 is an N6-acetyllysine (Lys-48). 2 residues coordinate Ca(2+): Lys-62 and Lys-64. Cys-105 and Cys-137 form a disulfide bridge. 4 residues coordinate an alpha-D-glucoside: Tyr-109, Lys-111, Tyr-128, and Asp-135. An N6-acetyllysine modification is found at Lys-159. Residues 191–202 (VESGSLEDDWDF) form a 1-1 repeat. The tract at residues 191–255 (VESGSLEDDW…DAKKPEDWDE (65 aa)) is 4 X approximate repeats. A disordered region spans residues 193 to 278 (SGSLEDDWDF…PEYKGEWKPR (86 aa)). Residues 198 to 308 (DDWDFLPPKK…YSPDPSIYAY (111 aa)) are P-domain. Basic and acidic residues predominate over residues 207–251 (KIKDPDASKPEDWDERAKIDDPTDSKPEDWDKPEHIPDPDAKKPE). Lys-209 bears the N6-acetyllysine mark. 6 tandem repeats follow at residues 210-221 (DPDASKPEDWDE), 227-238 (DPTDSKPEDWDK), 244-255 (DPDAKKPEDWDE), 259-269 (GEWEPPVIQNP), 273-283 (GEWKPRQIDNP), and 287-297 (GTWIHPEIDNP). An interaction with PPIB region spans residues 237–270 (DKPEHIPDPDAKKPEDWDEEMDGEWEPPVIQNPE). Residues 252 to 261 (DWDEEMDGEW) are compositionally biased toward acidic residues. The interval 259 to 297 (GEWEPPVIQNPEYKGEWKPRQIDNPDYKGTWIHPEIDNP) is 3 X approximate repeats. The C-domain stretch occupies residues 309 to 417 (DNFGVLGLDL…DVPGQAKDEL (109 aa)). Asp-317 is a binding site for an alpha-D-glucoside. Residue Asp-328 coordinates Ca(2+). Residues 350–417 (TKAAEKQMKD…DVPGQAKDEL (68 aa)) form a disordered region. Residues 352 to 379 (AAEKQMKDKQDEEQRLKEEEEDKKRKEE) are compositionally biased toward basic and acidic residues. Over residues 380 to 409 (EEAEDKEDDEDKDEDEEDEEDKEEDEEEDV) the composition is skewed to acidic residues. Positions 414 to 417 (KDEL) match the Prevents secretion from ER motif.

It belongs to the calreticulin family. In terms of assembly, monomer. Component of an EIF2 complex at least composed of CELF1/CUGBP1, CALR, CALR3, EIF2S1, EIF2S2, HSP90B1 and HSPA5. Interacts with PDIA3/ERp57 and SPACA9. Interacts with TRIM21. Interacts with NR3C1. Interacts with PPIB. Interacts (via P-domain) with PDIA5. Interacts with GABARAP. Interacts with CLCC1.

The protein resides in the endoplasmic reticulum lumen. It localises to the cytoplasm. Its subcellular location is the cytosol. It is found in the secreted. The protein localises to the extracellular space. The protein resides in the extracellular matrix. It localises to the cell surface. Its subcellular location is the sarcoplasmic reticulum lumen. It is found in the cytoplasmic vesicle. The protein localises to the secretory vesicle. The protein resides in the cortical granule. It localises to the cytoplasmic granule. In terms of biological role, calcium-binding chaperone that promotes folding, oligomeric assembly and quality control in the endoplasmic reticulum (ER) via the calreticulin/calnexin cycle. This lectin interacts transiently with almost all of the monoglucosylated glycoproteins that are synthesized in the ER. Interacts with the DNA-binding domain of NR3C1 and mediates its nuclear export. Involved in maternal gene expression regulation. May participate in oocyte maturation via the regulation of calcium homeostasis. The chain is Calreticulin (CALR) from Chlorocebus aethiops (Green monkey).